The sequence spans 189 residues: 3-hydroxyanthranilate 3,4-dioxygenase (189 aa).

O2 is bound at residue R50. Residues H54, E60, and H102 each contribute to the Fe cation site. E60 provides a ligand contact to substrate. Residues R106 and E116 each coordinate substrate. Residues C131, C136, C170, and C173 each coordinate a divalent metal cation.

This sequence belongs to the 3-HAO family. It depends on Fe(2+) as a cofactor.

The protein localises to the cytoplasm. It carries out the reaction 3-hydroxyanthranilate + O2 = (2Z,4Z)-2-amino-3-carboxymuconate 6-semialdehyde. The protein operates within cofactor biosynthesis; NAD(+) biosynthesis; quinolinate from L-kynurenine: step 3/3. Functionally, catalyzes the oxidative ring opening of 3-hydroxyanthranilate to 2-amino-3-carboxymuconate semialdehyde, which spontaneously cyclizes to quinolinate. This Aspergillus niger (strain ATCC MYA-4892 / CBS 513.88 / FGSC A1513) protein is 3-hydroxyanthranilate 3,4-dioxygenase (bna1).